A 409-amino-acid polypeptide reads, in one-letter code: Phosphatidylserine decarboxylase proenzyme, mitochondrial (409 aa).

The N-terminal 52 residues, 1–52, are a transit peptide targeting the mitochondrion; that stretch reads MAASVCRPYVRSLPGVMPWRSSSCHYEYTAMHHFLGSFQKLPFEPFNTGARK. Residues 53–63 are Mitochondrial matrix-facing; sequence IHTAPVRSLFL. The chain crosses the membrane as a helical span at residues 64-82; the sequence is LRPVPILLATGGGYAGYRQ. Residues 83-409 are Mitochondrial intermembrane-facing; sequence YEKYRDQKLE…IRFGEALGSL (327 aa). Catalysis depends on charge relay system; for autoendoproteolytic cleavage activity residues Asp-191, His-267, and Ser-378. The active-site Schiff-base intermediate with substrate; via pyruvic acid; for decarboxylase activity is Ser-378. Ser-378 is modified (pyruvic acid (Ser); by autocatalysis).

This sequence belongs to the phosphatidylserine decarboxylase family. PSD-B subfamily. Eukaryotic type I sub-subfamily. As to quaternary structure, heterodimer of a large membrane-associated beta subunit and a small pyruvoyl-containing alpha subunit. The cofactor is pyruvate. In terms of processing, is synthesized initially as an inactive proenzyme. Formation of the active enzyme involves a self-maturation process in which the active site pyruvoyl group is generated from an internal serine residue via an autocatalytic post-translational modification. Two non-identical subunits are generated from the proenzyme in this reaction, and the pyruvate is formed at the N-terminus of the alpha chain, which is derived from the carboxyl end of the proenzyme. The autoendoproteolytic cleavage occurs by a canonical serine protease mechanism, in which the side chain hydroxyl group of the serine supplies its oxygen atom to form the C-terminus of the beta chain, while the remainder of the serine residue undergoes an oxidative deamination to produce ammonia and the pyruvoyl prosthetic group on the alpha chain. During this reaction, the Ser that is part of the protease active site of the proenzyme becomes the pyruvoyl prosthetic group, which constitutes an essential element of the active site of the mature decarboxylase.

It localises to the mitochondrion inner membrane. It is found in the cytoplasm. The protein localises to the lipid droplet. The enzyme catalyses a 1,2-diacyl-sn-glycero-3-phospho-L-serine + H(+) = a 1,2-diacyl-sn-glycero-3-phosphoethanolamine + CO2. Its pathway is phospholipid metabolism; phosphatidylethanolamine biosynthesis. In terms of biological role, catalyzes the formation of phosphatidylethanolamine (PtdEtn) from phosphatidylserine (PtdSer). Plays a central role in phospholipid metabolism and in the interorganelle trafficking of phosphatidylserine. May be involved in lipid droplet biogenesis at the endoplasmic reticulum membrane. This Cricetulus griseus (Chinese hamster) protein is Phosphatidylserine decarboxylase proenzyme, mitochondrial.